Reading from the N-terminus, the 349-residue chain is tRNA pseudouridine synthase D (349 aa).

Residue Phe-26 coordinates substrate. The active-site Nucleophile is Asp-79. Asn-128 lines the substrate pocket. The TRUD domain occupies 154 to 302; that stretch reads GVPNYFGSQR…VEGSRRAVLL (149 aa). Phe-328 lines the substrate pocket.

It belongs to the pseudouridine synthase TruD family.

It carries out the reaction uridine(13) in tRNA = pseudouridine(13) in tRNA. Responsible for synthesis of pseudouridine from uracil-13 in transfer RNAs. The protein is tRNA pseudouridine synthase D of Yersinia pseudotuberculosis serotype O:1b (strain IP 31758).